The sequence spans 85 residues: Beta-insect depressant toxin Lqh-dprIT3e (85 aa).

The first 21 residues, 1–21, serve as a signal peptide directing secretion; sequence MKLLLLLTISASMLIEGLVNA. In terms of domain architecture, LCN-type CS-alpha/beta spans 22-82; the sequence is DGYIRGGDGC…EWDYETDTCG (61 aa). Intrachain disulfides connect Cys31/Cys81, Cys35/Cys56, Cys42/Cys63, and Cys46/Cys65. Gly82 carries the post-translational modification Glycine amide.

Belongs to the long (4 C-C) scorpion toxin superfamily. Sodium channel inhibitor family. Beta subfamily. In terms of tissue distribution, expressed by the venom gland.

It localises to the secreted. In terms of biological role, depressant insect beta-toxins cause a transient contraction paralysis followed by a slow flaccid paralysis. They bind voltage-independently at site-4 of sodium channels (Nav) and block action potentials, primarily by depolarizing the axonal membrane and suppressing the sodium current. This depressant toxin is active only on insects. It is found in a relatively small amount in the venom. The sequence is that of Beta-insect depressant toxin Lqh-dprIT3e from Leiurus hebraeus (Hebrew deathstalker scorpion).